The following is a 527-amino-acid chain: Low-affinity Na(+)/H(+) antiporter NhaS1 (527 aa).

The next 11 membrane-spanning stretches (helical) occupy residues 18 to 38 (FLIV…VPIL), 41 to 61 (IPYT…DVKL), 94 to 114 (WFPI…GIAF), 126 to 146 (IAFL…IALF), 169 to 189 (VAVV…TFDL), 196 to 216 (FVTV…SLSL), 240 to 260 (ILAE…GMVL), 276 to 296 (IVSI…FLLI), 311 to 331 (LILI…FGLS), 352 to 372 (TVLW…LSVP), and 380 to 400 (AIID…GLTT).

Belongs to the monovalent cation:proton antiporter 1 (CPA1) transporter (TC 2.A.36) family.

Its subcellular location is the cell membrane. Its function is as follows. Na(+)/H(+) antiporter that extrudes sodium in exchange for external protons. Might be able to function at relatively high concentrations of Na(+) ions. Also has Li(+)/H(+) antiport activity under K(+)-rich conditions, but it might not have any physiological relevance. In Synechocystis sp. (strain ATCC 27184 / PCC 6803 / Kazusa), this protein is Low-affinity Na(+)/H(+) antiporter NhaS1 (nhaS1).